We begin with the raw amino-acid sequence, 875 residues long: Lysine-specific demethylase JMJ26 (875 aa).

The disordered stretch occupies residues 31 to 103; the sequence is KPVEATSLSS…RSSVKKRATT (73 aa). Residues 62 to 69 carry the Nuclear localization signal motif; sequence RKRSKADE. The segment covering 79 to 93 has biased composition (basic and acidic residues); the sequence is KCDDENKCEENEKKQ. The Zn(2+) site is built by cysteine 193, cysteine 196, cysteine 207, cysteine 210, cysteine 216, cysteine 219, cysteine 236, cysteine 239, cysteine 322, cysteine 325, cysteine 339, and cysteine 347. The RING-type; degenerate zinc-finger motif lies at 193–240; it reads CHQCSKGERRYLFICTFCEVRLYCFPCIKKWYPHLSTDDILEKCPFCR. Residues 317–347 form a B box-type; degenerate zinc finger; sequence EERVFCNHCATSIVDLHRSCPKCSYELCLNC. A JmjC domain is found at 614–837; sequence PRSGILNIAT…ECLRLTDEFR (224 aa). Fe cation is bound by residues histidine 658, aspartate 660, and histidine 805.

It belongs to the JARID1 histone demethylase family. Fe(2+) is required as a cofactor. As to expression, expressed in inflorescences, roots, siliques, leaves and stems.

The protein resides in the nucleus. Functionally, may function as histone H3 lysine demethylase and be involved in regulation of gene expression. This Arabidopsis thaliana (Mouse-ear cress) protein is Lysine-specific demethylase JMJ26.